Reading from the N-terminus, the 186-residue chain is Thiol:disulfide interchange protein CycY (186 aa).

Positions 1 to 20 are cleaved as a signal peptide; the sequence is MGRYTLALLPLIVFGGIAHG. A Thioredoxin domain is found at 47-182; it reads DAEPAAARRA…LVPAMEKALG (136 aa). C80 and C83 form a disulfide bridge.

Belongs to the thioredoxin family. DsbE subfamily.

Its subcellular location is the periplasm. Required for disulfide bond formation in some periplasmic proteins. Also acts as a disulfide oxidoreductase in cytochromes c biogenesis. The cysteines of apocytochromes c must be in the reduced state for covalent linkage between the two moieties to occur. This Rhizobium leguminosarum bv. viciae protein is Thiol:disulfide interchange protein CycY (cycY).